We begin with the raw amino-acid sequence, 114 residues long: MKPKPSQFKNLERMLGLKTEQLDAVKVTIELKDKILIIENPTVIKMIAQGQEIYSVIGEAKEAQKEEPKVEIKDEDVKFVMEQTGKGEQEVKEALQKANGDIAKAILLLTGQET.

One can recognise an NAC-A/B domain in the interval 5-69; that stretch reads PSQFKNLERM…AKEAQKEEPK (65 aa).

Belongs to the NAC-alpha family. In terms of assembly, homodimer. Interacts with the ribosome. Binds ribosomal RNA.

Functionally, contacts the emerging nascent chain on the ribosome. In Sulfurisphaera tokodaii (strain DSM 16993 / JCM 10545 / NBRC 100140 / 7) (Sulfolobus tokodaii), this protein is Nascent polypeptide-associated complex protein.